Reading from the N-terminus, the 522-residue chain is 2-isopropylmalate synthase (522 aa).

In terms of domain architecture, Pyruvate carboxyltransferase spans 5-267 (VIIFDTTLRD…ETGINAKEIH (263 aa)). Asp14, His202, His204, and Asn238 together coordinate Mn(2+). Positions 392-522 (QLQQLVVQSD…MQKNRELGGV (131 aa)) are regulatory domain.

This sequence belongs to the alpha-IPM synthase/homocitrate synthase family. LeuA type 1 subfamily. In terms of assembly, homodimer. Mn(2+) is required as a cofactor.

The protein localises to the cytoplasm. The catalysed reaction is 3-methyl-2-oxobutanoate + acetyl-CoA + H2O = (2S)-2-isopropylmalate + CoA + H(+). The protein operates within amino-acid biosynthesis; L-leucine biosynthesis; L-leucine from 3-methyl-2-oxobutanoate: step 1/4. Functionally, catalyzes the condensation of the acetyl group of acetyl-CoA with 3-methyl-2-oxobutanoate (2-ketoisovalerate) to form 3-carboxy-3-hydroxy-4-methylpentanoate (2-isopropylmalate). The sequence is that of 2-isopropylmalate synthase from Shewanella baltica (strain OS155 / ATCC BAA-1091).